A 160-amino-acid chain; its full sequence is Cytochrome b6-f complex subunit 4 (160 aa).

Helical transmembrane passes span 36–56 (LLYI…GLAV), 95–115 (LLGV…PFLE), and 131–151 (TVFL…TLPI).

It belongs to the cytochrome b family. PetD subfamily. As to quaternary structure, the 4 large subunits of the cytochrome b6-f complex are cytochrome b6, subunit IV (17 kDa polypeptide, petD), cytochrome f and the Rieske protein, while the 4 small subunits are petG, petL, petM and petN. The complex functions as a dimer.

It localises to the plastid. Its subcellular location is the chloroplast thylakoid membrane. In terms of biological role, component of the cytochrome b6-f complex, which mediates electron transfer between photosystem II (PSII) and photosystem I (PSI), cyclic electron flow around PSI, and state transitions. The chain is Cytochrome b6-f complex subunit 4 from Oryza sativa (Rice).